A 484-amino-acid polypeptide reads, in one-letter code: Mitogen-activated protein kinase SLT2/MPK1 (484 aa).

The 296-residue stretch at 23–318 (FQLIKEIGHG…VDEALEHPYL (296 aa)) folds into the Protein kinase domain. Residues 29-37 (IGHGAYGIV) and K54 contribute to the ATP site. D153 functions as the Proton acceptor in the catalytic mechanism. T190 carries the phosphothreonine modification. A TXY motif is present at residues 190–192 (TEY). Y192 bears the Phosphotyrosine mark. Residues 383 to 392 (QQQQQQQQQP) are compositionally biased toward low complexity. 2 disordered regions span residues 383–403 (QQQQQQQQQPSDVDNGNAAAS) and 426–464 (IHSQNLPRHDADFPPRPQESMMEMRPATGNTADIPPQND).

It belongs to the protein kinase superfamily. CMGC Ser/Thr protein kinase family. MAP kinase subfamily. In terms of assembly, interacts with RLM1. Mg(2+) serves as cofactor. Dually phosphorylated on Thr-190 and Tyr-192, which activates the enzyme.

It catalyses the reaction L-seryl-[protein] + ATP = O-phospho-L-seryl-[protein] + ADP + H(+). The catalysed reaction is L-threonyl-[protein] + ATP = O-phospho-L-threonyl-[protein] + ADP + H(+). Its activity is regulated as follows. Activated by tyrosine and threonine phosphorylation by MKK1 and MKK2. Serine/threonine protein kinase involved in a signal transduction pathway that plays a role in yeast cell morphogenesis and cell growth. This pathway seems to start by SMP3; then involve the kinase PKC1 that may act the BCK1 kinase that then phosphorylates MKK1 and MKK2 which themselves phosphorylate the SLT2/MPK1 kinase which itself then phosphorylates and activates the transcription factor RLM1. Directly phosphorylates BCY1 upon TOR complex 1 (TORC1) inhibition. This is Mitogen-activated protein kinase SLT2/MPK1 (SLT2) from Saccharomyces cerevisiae (strain ATCC 204508 / S288c) (Baker's yeast).